A 554-amino-acid chain; its full sequence is Urocanate hydratase (554 aa).

Residues 51-52, Q129, 175-177, E195, R200, 241-242, 262-266, 272-273, and Y321 contribute to the NAD(+) site; these read GG, GMG, NA, QTSAH, and YL. C409 is an active-site residue. G491 provides a ligand contact to NAD(+).

Belongs to the urocanase family. NAD(+) serves as cofactor.

It is found in the cytoplasm. It carries out the reaction 4-imidazolone-5-propanoate = trans-urocanate + H2O. The protein operates within amino-acid degradation; L-histidine degradation into L-glutamate; N-formimidoyl-L-glutamate from L-histidine: step 2/3. Functionally, catalyzes the conversion of urocanate to 4-imidazolone-5-propionate. The protein is Urocanate hydratase of Caulobacter sp. (strain K31).